We begin with the raw amino-acid sequence, 580 residues long: Long-chain-fatty-acid--AMP ligase FadD28 (580 aa).

The disordered stretch occupies residues 421–440 (SERTFGGKIVTPSPGTPEGP).

It belongs to the ATP-dependent AMP-binding enzyme family.

The catalysed reaction is holo-[mycocerosate synthase] + a long-chain fatty acid + ATP = a long-chain fatty acyl-[mycocerosate synthase] + AMP + diphosphate. It catalyses the reaction a long-chain fatty acid + ATP + H(+) = a long-chain fatty acyl-AMP + diphosphate. The enzyme catalyses holo-[mycocerosate synthase] + a long-chain fatty acyl-AMP = a long-chain fatty acyl-[mycocerosate synthase] + AMP + H(+). The protein operates within lipid metabolism; fatty acid biosynthesis. In terms of biological role, involved in the biosynthesis of phthiocerol dimycocerosate (PDIM), a cell wall-associated lipid found only in pathogenic mycobacteria. Catalyzes the activation of long-chain fatty acids as acyl-adenylates (acyl-AMP), which are then transferred to the multifunctional polyketide synthase Mas for further chain extension. In Mycobacterium tuberculosis (strain CDC 1551 / Oshkosh), this protein is Long-chain-fatty-acid--AMP ligase FadD28 (fadD28).